Here is a 161-residue protein sequence, read N- to C-terminus: Crossover junction endodeoxyribonuclease RuvC (161 aa).

Active-site residues include D9, E69, and H144. Mg(2+) is bound by residues D9, E69, and H144.

Belongs to the RuvC family. In terms of assembly, homodimer which binds Holliday junction (HJ) DNA. The HJ becomes 2-fold symmetrical on binding to RuvC with unstacked arms; it has a different conformation from HJ DNA in complex with RuvA. In the full resolvosome a probable DNA-RuvA(4)-RuvB(12)-RuvC(2) complex forms which resolves the HJ. The cofactor is Mg(2+).

Its subcellular location is the cytoplasm. The enzyme catalyses Endonucleolytic cleavage at a junction such as a reciprocal single-stranded crossover between two homologous DNA duplexes (Holliday junction).. Its function is as follows. The RuvA-RuvB-RuvC complex processes Holliday junction (HJ) DNA during genetic recombination and DNA repair. Endonuclease that resolves HJ intermediates. Cleaves cruciform DNA by making single-stranded nicks across the HJ at symmetrical positions within the homologous arms, yielding a 5'-phosphate and a 3'-hydroxyl group; requires a central core of homology in the junction. The consensus cleavage sequence is 5'-(A/T)TT(C/G)-3'. Cleavage occurs on the 3'-side of the TT dinucleotide at the point of strand exchange. HJ branch migration catalyzed by RuvA-RuvB allows RuvC to scan DNA until it finds its consensus sequence, where it cleaves and resolves the cruciform DNA. The polypeptide is Crossover junction endodeoxyribonuclease RuvC (Borrelia turicatae (strain 91E135)).